A 232-amino-acid chain; its full sequence is 7-cyano-7-deazaguanine synthase 2 (232 aa).

An ATP-binding site is contributed by 9 to 19; the sequence is FSGGQDSTTCL. The Zn(2+) site is built by Cys189, Cys198, Cys201, and Cys204.

This sequence belongs to the QueC family. The cofactor is Zn(2+).

The enzyme catalyses 7-carboxy-7-deazaguanine + NH4(+) + ATP = 7-cyano-7-deazaguanine + ADP + phosphate + H2O + H(+). The protein operates within purine metabolism; 7-cyano-7-deazaguanine biosynthesis. Catalyzes the ATP-dependent conversion of 7-carboxy-7-deazaguanine (CDG) to 7-cyano-7-deazaguanine (preQ(0)). This Pseudomonas fluorescens (strain ATCC BAA-477 / NRRL B-23932 / Pf-5) protein is 7-cyano-7-deazaguanine synthase 2.